A 197-amino-acid chain; its full sequence is MLPPIVLASQSPARRQLLEAARIPFRVQPSYFDESQIQSPDPVELVQKLAAAKAEAVAAQQREPVLVIGADSVLYLGGEILGKPANALEAERRLRQMRGEVGELYTGHALIDTRQNRRLVHYAVTRVFFAKPSDEEIRTYVATGEPLNCAGCFAIDGRGSLFVERIEGCPGNVIGLSLPLLRRMIQELGYSLTEAWN.

The active-site Proton acceptor is the Asp71.

Belongs to the Maf family. A divalent metal cation serves as cofactor.

It is found in the cytoplasm. The catalysed reaction is a ribonucleoside 5'-triphosphate + H2O = a ribonucleoside 5'-phosphate + diphosphate + H(+). It carries out the reaction a 2'-deoxyribonucleoside 5'-triphosphate + H2O = a 2'-deoxyribonucleoside 5'-phosphate + diphosphate + H(+). Nucleoside triphosphate pyrophosphatase. May have a dual role in cell division arrest and in preventing the incorporation of modified nucleotides into cellular nucleic acids. In Synechococcus sp. (strain JA-3-3Ab) (Cyanobacteria bacterium Yellowstone A-Prime), this protein is Nucleoside triphosphate pyrophosphatase.